Here is a 272-residue protein sequence, read N- to C-terminus: Putative phosphoenolpyruvate synthase regulatory protein (272 aa).

152–159 provides a ligand contact to ADP; sequence GVSRCGKT.

The protein belongs to the pyruvate, phosphate/water dikinase regulatory protein family. PSRP subfamily.

The catalysed reaction is [pyruvate, water dikinase] + ADP = [pyruvate, water dikinase]-phosphate + AMP + H(+). It catalyses the reaction [pyruvate, water dikinase]-phosphate + phosphate + H(+) = [pyruvate, water dikinase] + diphosphate. In terms of biological role, bifunctional serine/threonine kinase and phosphorylase involved in the regulation of the phosphoenolpyruvate synthase (PEPS) by catalyzing its phosphorylation/dephosphorylation. In Ectopseudomonas mendocina (strain ymp) (Pseudomonas mendocina), this protein is Putative phosphoenolpyruvate synthase regulatory protein.